The primary structure comprises 72 residues: Cell division protein ZapB (72 aa).

Positions 3–71 (LSIIDQLEEK…LRSLLGQIDN (69 aa)) form a coiled coil.

It belongs to the ZapB family. In terms of assembly, homodimer. The ends of the coiled-coil dimer bind to each other, forming polymers. Interacts with FtsZ.

It is found in the cytoplasm. In terms of biological role, non-essential, abundant cell division factor that is required for proper Z-ring formation. It is recruited early to the divisome by direct interaction with FtsZ, stimulating Z-ring assembly and thereby promoting cell division earlier in the cell cycle. Its recruitment to the Z-ring requires functional FtsA or ZipA. The polypeptide is Cell division protein ZapB (Haemophilus ducreyi (strain 35000HP / ATCC 700724)).